The following is a 500-amino-acid chain: Matrilin-1 (500 aa).

Residues 1–29 form the signal peptide; the sequence is MKVTSGPAFALCSLLLLLLLLLQVPDSLS. A VWFA 1 domain is found at 30 to 226; that stretch reads LVPQPRGHLC…AKKFQEAFCV (197 aa). The N-linked (GlcNAc...) asparagine glycan is linked to Asn80. Positions 227–267 constitute an EGF-like domain; sequence VSDLCATGDHDCEQLCVSSPGSYTCACHEGFTLNSDGKTCN. 3 cysteine pairs are disulfide-bonded: Cys231/Cys242, Cys238/Cys251, and Cys253/Cys266. Residues 268–457 enclose the VWFA 2 domain; the sequence is VCRGGGSGSA…GKKLQKQICV (190 aa). Residue Asn348 is glycosylated (N-linked (GlcNAc...) asparagine). Residues 471–499 are a coiled coil; sequence EAKVEGLLQALTRKLEAVSGRLAVLENRI.

Homotrimer. Part of a complex composed of MATN1 (via VWFA1 domain), type 2 collagens and type 6 collagens. Forms a complex (via covalent bonds) with ACAN; the interaction increases in abundance with increasing age of the organism via an increase in occupancy of MATN1 binding sites. Interacts with COMP. N-glycosylated; reduces binding affinity for type 2 collagens. Expressed in femoral head articular cartilage. Expressed in the trachea and extraskeletal tissue around the eye.

The protein resides in the secreted. It localises to the extracellular space. The protein localises to the extracellular matrix. Functionally, a major component of the extracellular matrix of non-articular cartilage. Binds to type 2 collagens and forms long concatenated protein networks as part of the extracellular matrix. Required for the network-like organization and bundling of collagen fibrils surrounding chondrocytes in the zones of maturation and hypertrophy. Required for mechanotransduction and adaption to mechanical loading in cartilage chondrocytes, resulting in an increase in expression of the extracellular matrix components ACAN and COL2A1. Acts as a moderator of angiogenesis in response to injury. The polypeptide is Matrilin-1 (Mus musculus (Mouse)).